Here is a 105-residue protein sequence, read N- to C-terminus: Meiotically up-regulated gene 52 protein (105 aa).

Its function is as follows. Has a role in meiosis. This chain is Meiotically up-regulated gene 52 protein (mug52), found in Schizosaccharomyces pombe (strain 972 / ATCC 24843) (Fission yeast).